A 420-amino-acid chain; its full sequence is rRNA methyltransferase 3, mitochondrial (420 aa).

A mitochondrion-targeting transit peptide spans 1 to 40; it reads MAALVRPARFVVRPLLQVVQAWDLDARRWVRALRRSPVKV. The interval 49–88 is disordered; it reads EQKRAPGKQPRKAPSEASAQEQREKQPLEESASRAPSTWE. Basic and acidic residues predominate over residues 69–80; it reads EQREKQPLEESA. S-adenosyl-L-methionine-binding residues include glycine 356, isoleucine 380, and leucine 389.

Belongs to the class IV-like SAM-binding methyltransferase superfamily. RNA methyltransferase TrmH family. As to expression, expressed at same level in normal liver and hepatocarcinoma.

It is found in the mitochondrion. The catalysed reaction is guanosine(1370) in 16S rRNA + S-adenosyl-L-methionine = 2'-O-methylguanosine(1370) in 16S rRNA + S-adenosyl-L-homocysteine + H(+). Functionally, S-adenosyl-L-methionine-dependent 2'-O-ribose methyltransferase that catalyzes the formation of 2'-O-methylguanosine at position 1370 (Gm1370) in the 16S mitochondrial large subunit ribosomal RNA (mtLSU rRNA), a conserved modification in the peptidyl transferase domain of the mtLSU rRNA. Also required for formation of 2'-O-methyluridine at position 1369 (Um1369) mediated by MRM2. This chain is rRNA methyltransferase 3, mitochondrial, found in Homo sapiens (Human).